The primary structure comprises 37 residues: Large ribosomal subunit protein bL36c (37 aa).

The protein belongs to the bacterial ribosomal protein bL36 family.

The protein localises to the plastid. It localises to the chloroplast. The polypeptide is Large ribosomal subunit protein bL36c (Huperzia lucidula (Shining clubmoss)).